The following is a 386-amino-acid chain: 2,3,4,5-tetrahydropyridine-2,6-dicarboxylate N-succinyltransferase (386 aa).

Glu-257 functions as the Acyl-anhydride intermediate in the catalytic mechanism. Succinyl-CoA is bound by residues Arg-259, Gly-274, Ser-277, Ala-300, 315-316, Gly-323, Lys-349, and 362-365; these read DA and RQDS.

It belongs to the type 2 tetrahydrodipicolinate N-succinyltransferase family. As to quaternary structure, homotrimer.

It is found in the cytoplasm. It catalyses the reaction (S)-2,3,4,5-tetrahydrodipicolinate + succinyl-CoA + H2O = (S)-2-succinylamino-6-oxoheptanedioate + CoA. Its pathway is amino-acid biosynthesis; L-lysine biosynthesis via DAP pathway; LL-2,6-diaminopimelate from (S)-tetrahydrodipicolinate (succinylase route): step 1/3. In terms of biological role, catalyzes the conversion of the cyclic tetrahydrodipicolinate (THDP) into the acyclic N-succinyl-L-2-amino-6-oxopimelate using succinyl-CoA. The protein is 2,3,4,5-tetrahydropyridine-2,6-dicarboxylate N-succinyltransferase of Campylobacter jejuni subsp. jejuni serotype O:2 (strain ATCC 700819 / NCTC 11168).